Here is a 423-residue protein sequence, read N- to C-terminus: Gamma-glutamyl phosphate reductase (423 aa).

Residues 1 to 14 are compositionally biased toward low complexity; that stretch reads MTLQAAPRSAAAQQ. Positions 1–25 are disordered; sequence MTLQAAPRSAAAQQREPDLRQEVHD. Basic and acidic residues predominate over residues 15–25; that stretch reads REPDLRQEVHD.

Belongs to the gamma-glutamyl phosphate reductase family.

The protein localises to the cytoplasm. It carries out the reaction L-glutamate 5-semialdehyde + phosphate + NADP(+) = L-glutamyl 5-phosphate + NADPH + H(+). The protein operates within amino-acid biosynthesis; L-proline biosynthesis; L-glutamate 5-semialdehyde from L-glutamate: step 2/2. Functionally, catalyzes the NADPH-dependent reduction of L-glutamate 5-phosphate into L-glutamate 5-semialdehyde and phosphate. The product spontaneously undergoes cyclization to form 1-pyrroline-5-carboxylate. The polypeptide is Gamma-glutamyl phosphate reductase (Mycobacterium marinum (strain ATCC BAA-535 / M)).